We begin with the raw amino-acid sequence, 309 residues long: Foldase protein PrsA 2 (309 aa).

A signal peptide spans M1–A22. The N-palmitoyl cysteine moiety is linked to residue C23. The S-diacylglycerol cysteine moiety is linked to residue C23. One can recognise a PpiC domain in the interval T146 to K241.

Belongs to the PrsA family.

The protein resides in the cell membrane. It carries out the reaction [protein]-peptidylproline (omega=180) = [protein]-peptidylproline (omega=0). Functionally, plays a major role in protein secretion by helping the post-translocational extracellular folding of several secreted proteins. This chain is Foldase protein PrsA 2 (prsA2), found in Streptococcus pyogenes serotype M1.